The chain runs to 63 residues: Phylloseptin-Az1 (63 aa).

The first 19 residues, 1–19 (LKKSLFLVVFLGLATLSIC), serve as a signal peptide directing secretion. A propeptide spanning residues 20-41 (EEEKRETEEEEYNQGEDDKSEE) is cleaved from the precursor. F62 is modified (phenylalanine amide).

In terms of tissue distribution, expressed by the skin glands.

It is found in the secreted. Has antimicrobial activity. The polypeptide is Phylloseptin-Az1 (Pithecopus azureus (Orange-legged monkey tree frog)).